A 212-amino-acid polypeptide reads, in one-letter code: uncharacterized protein (212 aa).

Residues 186-206 traverse the membrane as a helical segment; it reads VITLISFMLFSILFFLIFLIV.

It localises to the membrane. This is an uncharacterized protein from Mycoplasma genitalium (strain ATCC 33530 / DSM 19775 / NCTC 10195 / G37) (Mycoplasmoides genitalium).